The primary structure comprises 165 residues: Protein SprT (165 aa).

The 143-residue stretch at 20–162 (EKLAQANLKL…YRCVHCGEQL (143 aa)) folds into the SprT-like domain. Histidine 78 provides a ligand contact to Zn(2+). Glutamate 79 is a catalytic residue. Histidine 82 is a Zn(2+) binding site.

It belongs to the SprT family. Requires Zn(2+) as cofactor.

Its subcellular location is the cytoplasm. This is Protein SprT from Escherichia coli (strain SMS-3-5 / SECEC).